The primary structure comprises 397 residues: Enoyl-[acyl-carrier-protein] reductase [NADH] (397 aa).

Residues 48–53 (GASTGY), 74–75 (FE), 111–112 (DA), and 139–140 (VA) contribute to the NAD(+) site. Substrate is bound at residue Tyr225. Tyr235 functions as the Proton donor in the catalytic mechanism. NAD(+)-binding positions include Lys244 and 273-275 (VVT).

The protein belongs to the TER reductase family. As to quaternary structure, monomer.

It carries out the reaction a 2,3-saturated acyl-[ACP] + NAD(+) = a (2E)-enoyl-[ACP] + NADH + H(+). It participates in lipid metabolism; fatty acid biosynthesis. Its function is as follows. Involved in the final reduction of the elongation cycle of fatty acid synthesis (FAS II). Catalyzes the reduction of a carbon-carbon double bond in an enoyl moiety that is covalently linked to an acyl carrier protein (ACP). This chain is Enoyl-[acyl-carrier-protein] reductase [NADH], found in Burkholderia mallei (strain NCTC 10247).